Here is a 239-residue protein sequence, read N- to C-terminus: Phosphoribosylaminoimidazole-succinocarboxamide synthase (239 aa).

Belongs to the SAICAR synthetase family.

The enzyme catalyses 5-amino-1-(5-phospho-D-ribosyl)imidazole-4-carboxylate + L-aspartate + ATP = (2S)-2-[5-amino-1-(5-phospho-beta-D-ribosyl)imidazole-4-carboxamido]succinate + ADP + phosphate + 2 H(+). Its pathway is purine metabolism; IMP biosynthesis via de novo pathway; 5-amino-1-(5-phospho-D-ribosyl)imidazole-4-carboxamide from 5-amino-1-(5-phospho-D-ribosyl)imidazole-4-carboxylate: step 1/2. This is Phosphoribosylaminoimidazole-succinocarboxamide synthase from Bacillus thuringiensis subsp. konkukian (strain 97-27).